Reading from the N-terminus, the 248-residue chain is Probable transcriptional regulatory protein RPB_4273 (248 aa).

Residues 1 to 22 (MAGHSQFKNIMHRKGKQDAQRS) form a disordered region.

Belongs to the TACO1 family.

The protein localises to the cytoplasm. In Rhodopseudomonas palustris (strain HaA2), this protein is Probable transcriptional regulatory protein RPB_4273.